Here is a 189-residue protein sequence, read N- to C-terminus: Movement protein p22 (189 aa).

It belongs to the tombusvirus/aureusvirus movement protein p22 family. In terms of assembly, interacts with host protein HFI22. In terms of processing, phosphorylated.

Its subcellular location is the host membrane. Its function is as follows. Cell-to-cell movement. Displays RNA-binding activity. This is Movement protein p22 from Capsicum annuum (Capsicum pepper).